A 109-amino-acid polypeptide reads, in one-letter code: Nucleoid-associated protein Bcer98_0019 (109 aa).

It belongs to the YbaB/EbfC family. As to quaternary structure, homodimer.

It localises to the cytoplasm. The protein resides in the nucleoid. Functionally, binds to DNA and alters its conformation. May be involved in regulation of gene expression, nucleoid organization and DNA protection. In Bacillus cytotoxicus (strain DSM 22905 / CIP 110041 / 391-98 / NVH 391-98), this protein is Nucleoid-associated protein Bcer98_0019.